Here is a 337-residue protein sequence, read N- to C-terminus: Aspartate carbamoyltransferase catalytic subunit (337 aa).

Carbamoyl phosphate-binding residues include Arg-59 and Thr-60. Lys-87 is a binding site for L-aspartate. 3 residues coordinate carbamoyl phosphate: Arg-109, His-142, and Gln-145. Residues Arg-182 and Arg-253 each coordinate L-aspartate. Residues Gly-294 and Pro-295 each coordinate carbamoyl phosphate.

The protein belongs to the aspartate/ornithine carbamoyltransferase superfamily. ATCase family. As to quaternary structure, heterododecamer (2C3:3R2) of six catalytic PyrB chains organized as two trimers (C3), and six regulatory PyrI chains organized as three dimers (R2).

The enzyme catalyses carbamoyl phosphate + L-aspartate = N-carbamoyl-L-aspartate + phosphate + H(+). The protein operates within pyrimidine metabolism; UMP biosynthesis via de novo pathway; (S)-dihydroorotate from bicarbonate: step 2/3. Its function is as follows. Catalyzes the condensation of carbamoyl phosphate and aspartate to form carbamoyl aspartate and inorganic phosphate, the committed step in the de novo pyrimidine nucleotide biosynthesis pathway. The chain is Aspartate carbamoyltransferase catalytic subunit from Prochlorococcus marinus (strain MIT 9211).